The sequence spans 360 residues: Lipid-A-disaccharide synthase (360 aa).

The protein belongs to the LpxB family.

It carries out the reaction a lipid X + a UDP-2-N,3-O-bis[(3R)-3-hydroxyacyl]-alpha-D-glucosamine = a lipid A disaccharide + UDP + H(+). The protein operates within bacterial outer membrane biogenesis; LPS lipid A biosynthesis. Condensation of UDP-2,3-diacylglucosamine and 2,3-diacylglucosamine-1-phosphate to form lipid A disaccharide, a precursor of lipid A, a phosphorylated glycolipid that anchors the lipopolysaccharide to the outer membrane of the cell. The polypeptide is Lipid-A-disaccharide synthase (Helicobacter pylori (strain Shi470)).